The following is a 571-amino-acid chain: Polypeptide N-acetylgalactosaminyltransferase 2 (571 aa).

Residues 1 to 6 lie on the Cytoplasmic side of the membrane; it reads MRRRSR. A helical; Signal-anchor for type II membrane protein membrane pass occupies residues 7 to 24; the sequence is MLLCFAFLWVLGIAYYMY. The Lumenal segment spans residues 25–571; it reads SGGGSALAGG…QWKFTLNLQQ (547 aa). Serine 29 is a glycosylation site (O-linked (Xyl...) (chondroitin sulfate) serine). Residues 53-66 are compositionally biased toward basic and acidic residues; sequence KKDLHHSNGEEKAQ. Residues 53 to 74 are disordered; it reads KKDLHHSNGEEKAQSMETLPPG. Cystine bridges form between cysteine 126–cysteine 354, cysteine 345–cysteine 423, cysteine 456–cysteine 473, and cysteine 496–cysteine 513. The tract at residues 135-240 is catalytic subdomain A; it reads LPATSVVITF…EHWLEPLLER (106 aa). 3 residues coordinate substrate: threonine 143, aspartate 176, and arginine 201. Aspartate 224 lines the Mn(2+) pocket. Serine 225 lines the substrate pocket. Histidine 226 contacts Mn(2+). Residues 300 to 362 form a catalytic subdomain B region; it reads PIKTPMIAGG…PCSRVGHVFR (63 aa). Substrate is bound at residue tryptophan 331. Mn(2+) is bound at residue histidine 359. The substrate site is built by arginine 362, histidine 365, and tyrosine 367. The Ricin B-type lectin domain maps to 443–566; it reads QDIAFGALQQ…PALSQQWKFT (124 aa). The residue at position 536 (serine 536) is a Phosphoserine. A disulfide bridge connects residues cysteine 539 and cysteine 555.

It belongs to the glycosyltransferase 2 family. GalNAc-T subfamily. It depends on Mn(2+) as a cofactor. Detected in urine (at protein level). Widely expressed.

It is found in the golgi apparatus. The protein resides in the golgi stack membrane. It localises to the secreted. The catalysed reaction is L-seryl-[protein] + UDP-N-acetyl-alpha-D-galactosamine = a 3-O-[N-acetyl-alpha-D-galactosaminyl]-L-seryl-[protein] + UDP + H(+). It carries out the reaction L-threonyl-[protein] + UDP-N-acetyl-alpha-D-galactosamine = a 3-O-[N-acetyl-alpha-D-galactosaminyl]-L-threonyl-[protein] + UDP + H(+). The protein operates within protein modification; protein glycosylation. Catalyzes the initial reaction in O-linked oligosaccharide biosynthesis, the transfer of an N-acetyl-D-galactosamine residue to a serine or threonine residue on the protein receptor. Has a broad spectrum of substrates for peptides such as EA2, Muc5AC, Muc1a, Muc1b. Probably involved in O-linked glycosylation of the immunoglobulin A1 (IgA1) hinge region. Involved in O-linked glycosylation of APOC-III, ANGPTL3 and PLTP. It participates in the regulation of HDL-C metabolism. This is Polypeptide N-acetylgalactosaminyltransferase 2 (GALNT2) from Homo sapiens (Human).